Here is a 257-residue protein sequence, read N- to C-terminus: Metallo-beta-lactamase type 2 (257 aa).

The N-terminal stretch at 1–30 is a signal peptide; the sequence is MKKNTLLKVGLCVSLLGTTQFVSTISSVQA. His116, His118, Asp120, His179, and Cys198 together coordinate Zn(2+). Substrate-binding residues include Lys201 and Asn210. His240 lines the Zn(2+) pocket.

The protein belongs to the metallo-beta-lactamase superfamily. Class-B beta-lactamase family. Monomer. It depends on Zn(2+) as a cofactor.

Its subcellular location is the periplasm. It catalyses the reaction a beta-lactam + H2O = a substituted beta-amino acid. Functionally, confers resistance to the different beta-lactams antibiotics (penicillin, cephalosporin and carbapenem) via the hydrolysis of the beta-lactam ring. The sequence is that of Metallo-beta-lactamase type 2 from Bacillus sp. (strain 170).